Reading from the N-terminus, the 137-residue chain is MKIALIAHDKKKQDMVQFTTAYKDILSHHELYATGTTGLKIQEATGLSVERFQSGPLGGDQQIGALIAANALDLVIFLRDPLTAQPHEPDVSALIRLCDVYAIPLATNMGTAEILVRTLDGGAFDFRNLVRGGEPNV.

The MGS-like domain maps to 1-137; it reads MKIALIAHDK…NLVRGGEPNV (137 aa). Substrate contacts are provided by residues histidine 8, lysine 12, 34 to 37, and 54 to 55; these read TGTT and SG. The active-site Proton donor/acceptor is the aspartate 60. Histidine 87 lines the substrate pocket.

Belongs to the methylglyoxal synthase family.

It carries out the reaction dihydroxyacetone phosphate = methylglyoxal + phosphate. Functionally, catalyzes the formation of methylglyoxal from dihydroxyacetone phosphate. The sequence is that of Methylglyoxal synthase from Bacillus velezensis (strain DSM 23117 / BGSC 10A6 / LMG 26770 / FZB42) (Bacillus amyloliquefaciens subsp. plantarum).